The chain runs to 246 residues: 2,3-bisphosphoglycerate-dependent phosphoglycerate mutase (246 aa).

Substrate contacts are provided by residues 9 to 16, 22 to 23, arginine 61, 88 to 91, lysine 99, 115 to 116, and 181 to 182; these read RHGQSAWN, TG, ERHY, RR, and GN. Catalysis depends on histidine 10, which acts as the Tele-phosphohistidine intermediate. Glutamate 88 (proton donor/acceptor) is an active-site residue.

The protein belongs to the phosphoglycerate mutase family. BPG-dependent PGAM subfamily.

The enzyme catalyses (2R)-2-phosphoglycerate = (2R)-3-phosphoglycerate. The protein operates within carbohydrate degradation; glycolysis; pyruvate from D-glyceraldehyde 3-phosphate: step 3/5. Its function is as follows. Catalyzes the interconversion of 2-phosphoglycerate and 3-phosphoglycerate. This Bifidobacterium longum (strain DJO10A) protein is 2,3-bisphosphoglycerate-dependent phosphoglycerate mutase.